Here is a 651-residue protein sequence, read N- to C-terminus: Coronin-like protein (651 aa).

WD repeat units lie at residues 79–110 (GHTA…GIWD), 138–169 (GHAR…KLWN), 180–210 (KHPD…RVWN), and 226–257 (AKNQ…GIWD). The segment at 408-609 (APSFHEAKRP…TSPKSLGLKK (202 aa)) is disordered. Basic and acidic residues predominate over residues 427–451 (LEEKKEQPKVEKPISESEKEVKQEA). Ser-441, Ser-454, and Ser-456 each carry phosphoserine. A compositionally biased stretch (low complexity) spans 452-465 (PKSPSPLKSASSSS). 2 positions are modified to phosphothreonine: Thr-517 and Thr-529. Composition is skewed to basic and acidic residues over residues 523-540 (ETKK…ELKP) and 547-572 (TDRK…EQEK). Residues Ser-573 and Ser-579 each carry the phosphoserine modification. A compositionally biased stretch (low complexity) spans 578–590 (SSITAAKTAITAS). Residues 618-650 (VLQLEDVVDKLTKANLDKDERLLKLEQKIGELS) are a coiled coil.

This sequence belongs to the WD repeat coronin family. As to quaternary structure, binds to F-actin.

The polypeptide is Coronin-like protein (CRN1) (Saccharomyces cerevisiae (strain ATCC 204508 / S288c) (Baker's yeast)).